Reading from the N-terminus, the 180-residue chain is Endoribonuclease YbeY (180 aa).

Residues His-118, His-122, and His-128 each coordinate Zn(2+).

This sequence belongs to the endoribonuclease YbeY family. Zn(2+) serves as cofactor.

The protein resides in the cytoplasm. Its function is as follows. Single strand-specific metallo-endoribonuclease involved in late-stage 70S ribosome quality control and in maturation of the 3' terminus of the 16S rRNA. The sequence is that of Endoribonuclease YbeY from Rhodococcus opacus (strain B4).